Reading from the N-terminus, the 440-residue chain is Proline--tRNA ligase (440 aa).

The protein belongs to the class-II aminoacyl-tRNA synthetase family. ProS type 2 subfamily. In terms of assembly, homodimer.

The protein resides in the cytoplasm. The catalysed reaction is tRNA(Pro) + L-proline + ATP = L-prolyl-tRNA(Pro) + AMP + diphosphate. Its function is as follows. Catalyzes the attachment of proline to tRNA(Pro) in a two-step reaction: proline is first activated by ATP to form Pro-AMP and then transferred to the acceptor end of tRNA(Pro). The polypeptide is Proline--tRNA ligase (Agrobacterium fabrum (strain C58 / ATCC 33970) (Agrobacterium tumefaciens (strain C58))).